The primary structure comprises 123 residues: Sirohydrochlorin cobaltochelatase (123 aa).

His-9 serves as the catalytic Proton acceptor. Residue His-9 coordinates Co(2+). Substrate is bound by residues Glu-43 and Phe-68–His-73. His-73 serves as a coordination point for Co(2+).

This sequence belongs to the CbiX family. CbiXS subfamily. In terms of assembly, homotetramer; dimer of dimers.

The catalysed reaction is Co-sirohydrochlorin + 2 H(+) = sirohydrochlorin + Co(2+). It participates in cofactor biosynthesis; adenosylcobalamin biosynthesis; cob(II)yrinate a,c-diamide from sirohydrochlorin (anaerobic route): step 1/10. Its function is as follows. Catalyzes the insertion of Co(2+) into sirohydrochlorin as part of the anaerobic pathway to cobalamin biosynthesis. In Sulfolobus acidocaldarius (strain ATCC 33909 / DSM 639 / JCM 8929 / NBRC 15157 / NCIMB 11770), this protein is Sirohydrochlorin cobaltochelatase.